A 76-amino-acid chain; its full sequence is uncharacterized protein (76 aa).

Residues 20–42 (GIVWGPKLAPWGITLGLGAFYFF) traverse the membrane as a helical segment.

It is found in the membrane. This is an uncharacterized protein from Dictyostelium discoideum (Social amoeba).